Consider the following 454-residue polypeptide: tRNA(Ile)-lysidine synthase (454 aa).

An ATP-binding site is contributed by 31–36; sequence SGGADS.

This sequence belongs to the tRNA(Ile)-lysidine synthase family.

The protein localises to the cytoplasm. It catalyses the reaction cytidine(34) in tRNA(Ile2) + L-lysine + ATP = lysidine(34) in tRNA(Ile2) + AMP + diphosphate + H(+). Ligates lysine onto the cytidine present at position 34 of the AUA codon-specific tRNA(Ile) that contains the anticodon CAU, in an ATP-dependent manner. Cytidine is converted to lysidine, thus changing the amino acid specificity of the tRNA from methionine to isoleucine. The chain is tRNA(Ile)-lysidine synthase from Porphyromonas gingivalis (strain ATCC BAA-308 / W83).